The sequence spans 25 residues: Inorganic pyrophosphatase (25 aa).

Monomer. Requires Mg(2+) as cofactor.

The enzyme catalyses diphosphate + H2O = 2 phosphate + H(+). This Cyanophora paradoxa protein is Inorganic pyrophosphatase.